Consider the following 396-residue polypeptide: Lipid-A-disaccharide synthase (396 aa).

This sequence belongs to the LpxB family.

The catalysed reaction is a lipid X + a UDP-2-N,3-O-bis[(3R)-3-hydroxyacyl]-alpha-D-glucosamine = a lipid A disaccharide + UDP + H(+). It functions in the pathway bacterial outer membrane biogenesis; LPS lipid A biosynthesis. In terms of biological role, condensation of UDP-2,3-diacylglucosamine and 2,3-diacylglucosamine-1-phosphate to form lipid A disaccharide, a precursor of lipid A, a phosphorylated glycolipid that anchors the lipopolysaccharide to the outer membrane of the cell. The polypeptide is Lipid-A-disaccharide synthase (Acinetobacter baylyi (strain ATCC 33305 / BD413 / ADP1)).